The following is a 250-amino-acid chain: MAVTKLVLVRHGESQWNNENRFTGWYDVDLSEKGVSEAKAAGKLLKDEGYSFDFAYTSVLKRAIHTLWNILDGLDQAWLPVEKSWKLNERHYGALQGLNKAETAEKYGDEQVKQWRRGFAVTPPALTKDDERYPGHDPRYAKLSEQELPLTESLALTIDRVIPYWNETILPRLKSGERVIIAAHGNSLRALVKYLDNMSEEEILELNIPTGVPLVYEFDENFKPIKHYYLGNADEIAAKAAAVANQGKAK.

Residues 10–17 (RHGESQWN), 23–24 (TG), Arg62, 89–92 (ERHY), Lys100, 116–117 (RR), and 185–186 (GN) contribute to the substrate site. His11 acts as the Tele-phosphohistidine intermediate in catalysis. Residue Glu89 is the Proton donor/acceptor of the active site.

It belongs to the phosphoglycerate mutase family. BPG-dependent PGAM subfamily. Homodimer.

The catalysed reaction is (2R)-2-phosphoglycerate = (2R)-3-phosphoglycerate. Its pathway is carbohydrate degradation; glycolysis; pyruvate from D-glyceraldehyde 3-phosphate: step 3/5. Functionally, catalyzes the interconversion of 2-phosphoglycerate and 3-phosphoglycerate. This Cronobacter sakazakii (strain ATCC BAA-894) (Enterobacter sakazakii) protein is 2,3-bisphosphoglycerate-dependent phosphoglycerate mutase.